Reading from the N-terminus, the 89-residue chain is Conotoxin Lt6.4 (89 aa).

A signal peptide spans methionine 1 to alanine 22. Positions aspartate 23 to lysine 50 are excised as a propeptide. Intrachain disulfides connect cysteine 52–cysteine 67, cysteine 59–cysteine 71, and cysteine 66–cysteine 80.

This sequence belongs to the conotoxin O1 superfamily. In terms of tissue distribution, expressed by the venom duct.

The protein resides in the secreted. In Conus litteratus (Lettered cone), this protein is Conotoxin Lt6.4.